We begin with the raw amino-acid sequence, 218 residues long: Cytochrome b6 (218 aa).

The chain crosses the membrane as a helical span at residues 35–55; sequence IFYCLGGITLVCFLIQFATGF. Cys38 provides a ligand contact to heme c. Residues His89 and His103 each contribute to the heme b site. 3 helical membrane passes run 93-113, 119-139, and 189-209; these read ASMM…TGGF, LTWV…VTGY, and LHTF…FLMI. His190 and His205 together coordinate heme b.

This sequence belongs to the cytochrome b family. PetB subfamily. The 4 large subunits of the cytochrome b6-f complex are cytochrome b6, subunit IV (17 kDa polypeptide, PetD), cytochrome f and the Rieske protein, while the 4 small subunits are PetG, PetL, PetM and PetN. The complex functions as a dimer. Heme b is required as a cofactor. Requires heme c as cofactor.

The protein localises to the cellular thylakoid membrane. Functionally, component of the cytochrome b6-f complex, which mediates electron transfer between photosystem II (PSII) and photosystem I (PSI), cyclic electron flow around PSI, and state transitions. This chain is Cytochrome b6, found in Prochlorococcus marinus (strain MIT 9211).